Consider the following 1756-residue polypeptide: Transposon Ty1-BR Gag-Pol polyprotein (1756 aa).

Composition is skewed to polar residues over residues 1 to 10 (MESQQLSNYP), 48 to 60 (TKAN…TPAS), and 127 to 152 (QSQF…GNTF). 3 disordered regions span residues 1 to 93 (MESQ…MMTQ), 126 to 173 (PQSQ…RPPP), and 352 to 421 (GSRN…SKST). Residues 153-165 (TDSSSADSDMTST) show a composition bias toward low complexity. An RNA-binding region spans residues 299–401 (NNGIHINNKV…NSKSKTARAH (103 aa)). Low complexity predominate over residues 402–418 (NVSTSNNSPSTDNDSIS). S416 is subject to Phosphoserine. D461 functions as the For protease activity; shared with dimeric partner in the catalytic mechanism. The tract at residues 583–640 (NVHTSESTRKYPYPFIHRMLAHANAQTIRYSLKNNTITYFNESDVDWSSAIDYQCPDC) is integrase-type zinc finger-like. The 176-residue stretch at 660-835 (NSYEPFQYLH…AGLDISTLLP (176 aa)) folds into the Integrase catalytic domain. 2 residues coordinate Mg(2+): D671 and D736. Disordered stretches follow at residues 956–1088 (SKAV…TEKR) and 1142–1173 (PTEL…SNAY). A compositionally biased stretch (low complexity) spans 960 to 969 (SPTDSTPPST). Composition is skewed to polar residues over residues 1005-1017 (STPQ…STDS) and 1031-1043 (MSQS…SYAS). The span at 1044–1053 (KSKDFRHSDS) shows a compositional bias: basic and acidic residues. The segment covering 1054-1082 (YSDNETNHTNVPISSTGGTNNKTVPQTSE) has biased composition (polar residues). Residues 1179-1213 (KKRSLEDNETEIKVSRDTWNTKNMRSLEPPRSKKR) carry the Bipartite nuclear localization signal motif. The Reverse transcriptase Ty1/copia-type domain occupies 1339–1477 (NNYYITQLDI…DILGLEIKYQ (139 aa)). D1347, D1428, D1429, D1611, E1653, and D1686 together coordinate Mg(2+). The RNase H Ty1/copia-type domain occupies 1611–1753 (DASYGNQPYY…IKTFKLLTNK (143 aa)).

In terms of assembly, the capsid protein forms a homotrimer, from which the VLPs are assembled. The protease is a homodimer, whose active site consists of two apposed aspartic acid residues. In terms of processing, initially, virus-like particles (VLPs) are composed of the structural unprocessed proteins Gag and Gag-Pol, and also contain the host initiator methionine tRNA (tRNA(i)-Met) which serves as a primer for minus-strand DNA synthesis, and a dimer of genomic Ty RNA. Processing of the polyproteins occurs within the particle and proceeds by an ordered pathway, called maturation. First, the protease (PR) is released by autocatalytic cleavage of the Gag-Pol polyprotein yielding capsid protein p45 and a Pol-p154 precursor protein. This cleavage is a prerequisite for subsequent processing of Pol-p154 at the remaining sites to release the mature structural and catalytic proteins. Maturation takes place prior to the RT reaction and is required to produce transposition-competent VLPs.

It localises to the cytoplasm. The protein localises to the nucleus. It carries out the reaction DNA(n) + a 2'-deoxyribonucleoside 5'-triphosphate = DNA(n+1) + diphosphate. The enzyme catalyses Endonucleolytic cleavage to 5'-phosphomonoester.. Capsid protein (CA) is the structural component of the virus-like particle (VLP), forming the shell that encapsulates the retrotransposons dimeric RNA genome. The particles are assembled from trimer-clustered units and there are holes in the capsid shells that allow for the diffusion of macromolecules. CA also has nucleocapsid-like chaperone activity, promoting primer tRNA(i)-Met annealing to the multipartite primer-binding site (PBS), dimerization of Ty1 RNA and initiation of reverse transcription. Its function is as follows. The aspartyl protease (PR) mediates the proteolytic cleavages of the Gag and Gag-Pol polyproteins after assembly of the VLP. Functionally, reverse transcriptase/ribonuclease H (RT) is a multifunctional enzyme that catalyzes the conversion of the retro-elements RNA genome into dsDNA within the VLP. The enzyme displays a DNA polymerase activity that can copy either DNA or RNA templates, and a ribonuclease H (RNase H) activity that cleaves the RNA strand of RNA-DNA heteroduplexes during plus-strand synthesis and hydrolyzes RNA primers. The conversion leads to a linear dsDNA copy of the retrotransposon that includes long terminal repeats (LTRs) at both ends. In terms of biological role, integrase (IN) targets the VLP to the nucleus, where a subparticle preintegration complex (PIC) containing at least integrase and the newly synthesized dsDNA copy of the retrotransposon must transit the nuclear membrane. Once in the nucleus, integrase performs the integration of the dsDNA into the host genome. The protein is Transposon Ty1-BR Gag-Pol polyprotein (TY1B-BR) of Saccharomyces cerevisiae (strain ATCC 204508 / S288c) (Baker's yeast).